Here is a 359-residue protein sequence, read N- to C-terminus: RNA-binding protein 4B (359 aa).

RRM domains lie at V2–N72 and T78–S148. The segment at S160 to V177 adopts a CCHC-type zinc-finger fold. An interaction with TNPO3 region spans residues A196–F359.

In terms of assembly, interacts with TNPO3, which may mediate nuclear import of the protein. In terms of tissue distribution, expressed in liver and kidney (at protein level). Ubiquitously expressed.

It localises to the nucleus. It is found in the nucleolus. Functionally, required for the translational activation of PER1 mRNA in response to circadian clock. Binds directly to the 3'-UTR of the PER1 mRNA. This is RNA-binding protein 4B (RBM4B) from Homo sapiens (Human).